The primary structure comprises 163 residues: 3-isopropylmalate dehydratase small subunit (163 aa).

Belongs to the LeuD family. LeuD type 2 subfamily. In terms of assembly, heterodimer of LeuC and LeuD.

The enzyme catalyses (2R,3S)-3-isopropylmalate = (2S)-2-isopropylmalate. It participates in amino-acid biosynthesis; L-leucine biosynthesis; L-leucine from 3-methyl-2-oxobutanoate: step 2/4. In terms of biological role, catalyzes the isomerization between 2-isopropylmalate and 3-isopropylmalate, via the formation of 2-isopropylmaleate. The protein is 3-isopropylmalate dehydratase small subunit of Endomicrobium trichonymphae.